Here is a 171-residue protein sequence, read N- to C-terminus: Ribosome maturation factor RimM (171 aa).

Residues 97 to 169 enclose the PRC barrel domain; that stretch reads DGEFYYHEII…RVDVDIMEGL (73 aa).

The protein belongs to the RimM family. In terms of assembly, binds ribosomal protein uS19.

It localises to the cytoplasm. Functionally, an accessory protein needed during the final step in the assembly of 30S ribosomal subunit, possibly for assembly of the head region. Essential for efficient processing of 16S rRNA. May be needed both before and after RbfA during the maturation of 16S rRNA. It has affinity for free ribosomal 30S subunits but not for 70S ribosomes. This chain is Ribosome maturation factor RimM, found in Lactococcus lactis subsp. cremoris (strain MG1363).